Here is a 165-residue protein sequence, read N- to C-terminus: 2-C-methyl-D-erythritol 2,4-cyclodiphosphate synthase (165 aa).

Positions 8 and 10 each coordinate a divalent metal cation. 4-CDP-2-C-methyl-D-erythritol 2-phosphate-binding positions include 8–10 and 34–35; these read DVH and HS. Residue His-42 coordinates a divalent metal cation. Residues 56–58, 61–65, 132–135, Phe-139, and Arg-142 contribute to the 4-CDP-2-C-methyl-D-erythritol 2-phosphate site; these read DIG, FPDTD, and TTTE.

The protein belongs to the IspF family. Homotrimer. A divalent metal cation serves as cofactor.

The enzyme catalyses 4-CDP-2-C-methyl-D-erythritol 2-phosphate = 2-C-methyl-D-erythritol 2,4-cyclic diphosphate + CMP. The protein operates within isoprenoid biosynthesis; isopentenyl diphosphate biosynthesis via DXP pathway; isopentenyl diphosphate from 1-deoxy-D-xylulose 5-phosphate: step 4/6. In terms of biological role, involved in the biosynthesis of isopentenyl diphosphate (IPP) and dimethylallyl diphosphate (DMAPP), two major building blocks of isoprenoid compounds. Catalyzes the conversion of 4-diphosphocytidyl-2-C-methyl-D-erythritol 2-phosphate (CDP-ME2P) to 2-C-methyl-D-erythritol 2,4-cyclodiphosphate (ME-CPP) with a corresponding release of cytidine 5-monophosphate (CMP). This is 2-C-methyl-D-erythritol 2,4-cyclodiphosphate synthase from Halothermothrix orenii (strain H 168 / OCM 544 / DSM 9562).